Consider the following 239-residue polypeptide: Cell number regulator 6 (239 aa).

Residues 1–10 (MAEDATSSHP) show a composition bias toward polar residues. A disordered region spans residues 1–33 (MAEDATSSHPSRYVKLTKDQDAPAEDIRPGELN). Basic and acidic residues predominate over residues 16–29 (LTKDQDAPAEDIRP). 2 consecutive transmembrane segments (helical) span residues 107–127 (CVCHAVFVEGGITLAILTAIF) and 136–156 (FLIGEGLVFSWWLCATYTGIF).

It belongs to the cornifelin family. Expressed in roots, leaves, stalks, apical meristems, immature ears, endosperm, pericarp and tassel spikelets.

Its subcellular location is the membrane. The sequence is that of Cell number regulator 6 (CNR6) from Zea mays (Maize).